The following is a 117-amino-acid chain: Large ribosomal subunit protein bL20c (117 aa).

The protein belongs to the bacterial ribosomal protein bL20 family.

It localises to the plastid. It is found in the chloroplast. Binds directly to 23S ribosomal RNA and is necessary for the in vitro assembly process of the 50S ribosomal subunit. It is not involved in the protein synthesizing functions of that subunit. This Eucalyptus globulus subsp. globulus (Tasmanian blue gum) protein is Large ribosomal subunit protein bL20c.